The sequence spans 346 residues: Phosphoribosylformylglycinamidine cyclo-ligase (346 aa).

It belongs to the AIR synthase family.

The protein resides in the cytoplasm. The catalysed reaction is 2-formamido-N(1)-(5-O-phospho-beta-D-ribosyl)acetamidine + ATP = 5-amino-1-(5-phospho-beta-D-ribosyl)imidazole + ADP + phosphate + H(+). It participates in purine metabolism; IMP biosynthesis via de novo pathway; 5-amino-1-(5-phospho-D-ribosyl)imidazole from N(2)-formyl-N(1)-(5-phospho-D-ribosyl)glycinamide: step 2/2. The polypeptide is Phosphoribosylformylglycinamidine cyclo-ligase (Vibrio vulnificus (strain YJ016)).